The chain runs to 360 residues: Mitogen-activated protein kinase 14 (360 aa).

Ser-2 is modified (N-acetylserine). Ser-2 is subject to Phosphoserine. Thr-16 carries the post-translational modification Phosphothreonine. Residues Tyr-24–Phe-308 form the Protein kinase domain. Residues Val-30–Val-38 and Lys-53 each bind ATP. Lys-53 is modified (N6-acetyllysine). Catalysis depends on Asp-150, which acts as the Proton acceptor. Lys-152 is subject to N6-acetyllysine. At Thr-180 the chain carries Phosphothreonine; by MAP2K3, MAP2K4, MAP2K6 and autocatalysis. The residue at position 182 (Tyr-182) is a Phosphotyrosine; by MAP2K3, MAP2K4, MAP2K6 and autocatalysis. Position 263 is a phosphothreonine (Thr-263). A Phosphotyrosine; by ZAP70 modification is found at Tyr-323.

The protein belongs to the protein kinase superfamily. CMGC Ser/Thr protein kinase family. MAP kinase subfamily. Component of a signaling complex containing at least AKAP13, PKN1, MAPK14, ZAK and MAP2K3. Within this complex, AKAP13 interacts directly with PKN1, which in turn recruits MAPK14, MAP2K3 and ZAK. Binds to a kinase interaction motif within the protein tyrosine phosphatase, PTPRR. This interaction retains MAPK14 in the cytoplasm and prevents nuclear accumulation. Interacts with SPAG9 and GADD45A. Interacts with CDC25B, CDC25C, DUSP1, DUSP10, DUSP16, NP60, SUPT20H and TAB1. Interacts with casein kinase II subunits CSNK2A1 and CSNK2B. Interacts with PPM1D. Interacts with CDK5RAP3; recruits PPM1D to MAPK14 and may regulate its dephosphorylation. Interacts with DUSP2; this interaction does not lead to catalytic activation of DUSP2 and dephosphrylation of MAPK14. Requires Mg(2+) as cofactor. Post-translationally, dually phosphorylated on Thr-180 and Tyr-182 by the MAP2Ks MAP2K3/MKK3, MAP2K4/MKK4 and MAP2K6/MKK6 in response to inflammatory cytokines, environmental stress or growth factors, which activates the enzyme. Dual phosphorylation can also be mediated by TAB1-mediated autophosphorylation. TCR engagement in T-cells also leads to Tyr-323 phosphorylation by ZAP70. Dephosphorylated and inactivated by DUPS1, DUSP10 and DUSP16. PPM1D also mediates dephosphorylation and inactivation of MAPK14. Acetylated at Lys-53 and Lys-152 by KAT2B and EP300. Acetylation at Lys-53 increases the affinity for ATP and enhances kinase activity. Lys-53 and Lys-152 are deacetylated by HDAC3. In terms of processing, ubiquitinated. Ubiquitination leads to degradation by the proteasome pathway.

It is found in the cytoplasm. Its subcellular location is the nucleus. It carries out the reaction L-seryl-[protein] + ATP = O-phospho-L-seryl-[protein] + ADP + H(+). It catalyses the reaction L-threonyl-[protein] + ATP = O-phospho-L-threonyl-[protein] + ADP + H(+). With respect to regulation, activated by cell stresses such as DNA damage, heat shock, osmotic shock, anisomycin and sodium arsenite, as well as pro-inflammatory stimuli such as bacterial lipopolysaccharide (LPS) and interleukin-1. Activation occurs through dual phosphorylation of Thr-180 and Tyr-182 by either of two dual specificity kinases, MAP2K3/MKK3 or MAP2K6/MKK6, and potentially also MAP2K4/MKK4, as well as by TAB1-mediated autophosphorylation. MAPK14 phosphorylated on both Thr-180 and Tyr-182 is 10-20-fold more active than MAPK14 phosphorylated only on Thr-180, whereas MAPK14 phosphorylated on Tyr-182 alone is inactive. whereas Thr-180 is necessary for catalysis, Tyr-182 may be required for auto-activation and substrate recognition. Phosphorylated at Tyr-323 by ZAP70 in an alternative activation pathway in response to TCR signaling in T-cells. This alternative pathway is inhibited by GADD45A. Inhibited by dual specificity phosphatases, such as DUSP1, DUSP10, and DUSP16. Specifically inhibited by the binding of pyridinyl-imidazole compounds, which are cytokine-suppressive anti-inflammatory drugs (CSAID). SB203580 is an inhibitor of MAPK14. Its function is as follows. Serine/threonine kinase which acts as an essential component of the MAP kinase signal transduction pathway. MAPK14 is one of the four p38 MAPKs which play an important role in the cascades of cellular responses evoked by extracellular stimuli such as pro-inflammatory cytokines or physical stress leading to direct activation of transcription factors. Accordingly, p38 MAPKs phosphorylate a broad range of proteins and it has been estimated that they may have approximately 200 to 300 substrates each. Some of the targets are downstream kinases which are activated through phosphorylation and further phosphorylate additional targets. RPS6KA5/MSK1 and RPS6KA4/MSK2 can directly phosphorylate and activate transcription factors such as CREB1, ATF1, the NF-kappa-B isoform RELA/NFKB3, STAT1 and STAT3, but can also phosphorylate histone H3 and the nucleosomal protein HMGN1. RPS6KA5/MSK1 and RPS6KA4/MSK2 play important roles in the rapid induction of immediate-early genes in response to stress or mitogenic stimuli, either by inducing chromatin remodeling or by recruiting the transcription machinery. On the other hand, two other kinase targets, MAPKAPK2/MK2 and MAPKAPK3/MK3, participate in the control of gene expression mostly at the post-transcriptional level, by phosphorylating ZFP36 (tristetraprolin) and ELAVL1, and by regulating EEF2K, which is important for the elongation of mRNA during translation. MKNK1/MNK1 and MKNK2/MNK2, two other kinases activated by p38 MAPKs, regulate protein synthesis by phosphorylating the initiation factor EIF4E2. MAPK14 also interacts with casein kinase II, leading to its activation through autophosphorylation and further phosphorylation of TP53/p53. In the cytoplasm, the p38 MAPK pathway is an important regulator of protein turnover. For example, CFLAR is an inhibitor of TNF-induced apoptosis whose proteasome-mediated degradation is regulated by p38 MAPK phosphorylation. In a similar way, MAPK14 phosphorylates the ubiquitin ligase SIAH2, regulating its activity towards EGLN3. MAPK14 may also inhibit the lysosomal degradation pathway of autophagy by interfering with the intracellular trafficking of the transmembrane protein ATG9. Another function of MAPK14 is to regulate the endocytosis of membrane receptors by different mechanisms that impinge on the small GTPase RAB5A. In addition, clathrin-mediated EGFR internalization induced by inflammatory cytokines and UV irradiation depends on MAPK14-mediated phosphorylation of EGFR itself as well as of RAB5A effectors. Ectodomain shedding of transmembrane proteins is regulated by p38 MAPKs as well. In response to inflammatory stimuli, p38 MAPKs phosphorylate the membrane-associated metalloprotease ADAM17. Such phosphorylation is required for ADAM17-mediated ectodomain shedding of TGF-alpha family ligands, which results in the activation of EGFR signaling and cell proliferation. Another p38 MAPK substrate is FGFR1. FGFR1 can be translocated from the extracellular space into the cytosol and nucleus of target cells, and regulates processes such as rRNA synthesis and cell growth. FGFR1 translocation requires p38 MAPK activation. In the nucleus, many transcription factors are phosphorylated and activated by p38 MAPKs in response to different stimuli. Classical examples include ATF1, ATF2, ATF6, ELK1, PTPRH, DDIT3, TP53/p53 and MEF2C and MEF2A. The p38 MAPKs are emerging as important modulators of gene expression by regulating chromatin modifiers and remodelers. The promoters of several genes involved in the inflammatory response, such as IL6, IL8 and IL12B, display a p38 MAPK-dependent enrichment of histone H3 phosphorylation on 'Ser-10' (H3S10ph) in LPS-stimulated myeloid cells. This phosphorylation enhances the accessibility of the cryptic NF-kappa-B-binding sites marking promoters for increased NF-kappa-B recruitment. Phosphorylates CDC25B and CDC25C which is required for binding to 14-3-3 proteins and leads to initiation of a G2 delay after ultraviolet radiation. Phosphorylates TIAR following DNA damage, releasing TIAR from GADD45A mRNA and preventing mRNA degradation. The p38 MAPKs may also have kinase-independent roles, which are thought to be due to the binding to targets in the absence of phosphorylation. Protein O-Glc-N-acylation catalyzed by the OGT is regulated by MAPK14, and, although OGT does not seem to be phosphorylated by MAPK14, their interaction increases upon MAPK14 activation induced by glucose deprivation. This interaction may regulate OGT activity by recruiting it to specific targets such as neurofilament H, stimulating its O-Glc-N-acylation. Required in mid-fetal development for the growth of embryo-derived blood vessels in the labyrinth layer of the placenta. Also plays an essential role in developmental and stress-induced erythropoiesis, through regulation of EPO gene expression. Phosphorylates S100A9 at 'Thr-113'. This chain is Mitogen-activated protein kinase 14, found in Pan troglodytes (Chimpanzee).